The following is a 98-amino-acid chain: Large ribosomal subunit protein bL28 (98 aa).

Belongs to the bacterial ribosomal protein bL28 family.

The sequence is that of Large ribosomal subunit protein bL28 from Mesorhizobium japonicum (strain LMG 29417 / CECT 9101 / MAFF 303099) (Mesorhizobium loti (strain MAFF 303099)).